Reading from the N-terminus, the 259-residue chain is 5'-nucleotidase SurE (259 aa).

A divalent metal cation contacts are provided by Asp8, Asp9, Ser40, and Asn92.

This sequence belongs to the SurE nucleotidase family. Requires a divalent metal cation as cofactor.

It is found in the cytoplasm. It catalyses the reaction a ribonucleoside 5'-phosphate + H2O = a ribonucleoside + phosphate. Functionally, nucleotidase that shows phosphatase activity on nucleoside 5'-monophosphates. The polypeptide is 5'-nucleotidase SurE (Xanthomonas campestris pv. campestris (strain 8004)).